A 114-amino-acid polypeptide reads, in one-letter code: Dolichyl-diphosphooligosaccharide--protein glycosyltransferase subunit DAD1 (114 aa).

Over 1 to 30 the chain is Cytoplasmic; the sequence is MPKAAGDAKLLIQSLNKAYAATPTNLKIID. A helical transmembrane segment spans residues 31–51; that stretch reads LYVVFAVVTALLQVVYMGIVG. Residue S52 is a topological domain, lumenal. Residues 53 to 73 traverse the membrane as a helical segment; it reads FPFNSFLSGVLSCIGTAVLAV. Over 74-93 the chain is Cytoplasmic; sequence CHRIQVNKDNKEFKDLAPER. A helical membrane pass occupies residues 94-114; it reads AFADFVLCSLVLHLVIMNFLG.

It belongs to the DAD/OST2 family. In terms of assembly, component of the oligosaccharyltransferase (OST) complex.

It localises to the endoplasmic reticulum membrane. Its pathway is protein modification; protein glycosylation. Subunit of the oligosaccharyl transferase (OST) complex that catalyzes the initial transfer of a defined glycan (Glc(3)Man(9)GlcNAc(2) in eukaryotes) from the lipid carrier dolichol-pyrophosphate to an asparagine residue within an Asn-X-Ser/Thr consensus motif in nascent polypeptide chains, the first step in protein N-glycosylation. N-glycosylation occurs cotranslationally and the complex associates with the Sec61 complex at the channel-forming translocon complex that mediates protein translocation across the endoplasmic reticulum (ER). All subunits are required for a maximal enzyme activity. The sequence is that of Dolichyl-diphosphooligosaccharide--protein glycosyltransferase subunit DAD1 (DAD1) from Hordeum vulgare (Barley).